We begin with the raw amino-acid sequence, 420 residues long: Protein TabA (420 aa).

An N6-(pyridoxal phosphate)lysine modification is found at lysine 57.

The protein belongs to the Orn/Lys/Arg decarboxylase class-II family. Requires pyridoxal 5'-phosphate as cofactor.

Involved in tabtoxin production and pathogenicity. This Pseudomonas amygdali pv. tabaci (Pseudomonas syringae pv. tabaci) protein is Protein TabA (tabA).